The primary structure comprises 561 residues: Putative transport protein CKO_02260 (561 aa).

Transmembrane regions (helical) follow at residues 8-28, 32-52, 66-86, 94-114, and 158-178; these read LLNG…LCLG, LGSV…LLGQ, FMLF…SIFF, MLAL…GKLF, and NLSL…IVGA. RCK C-terminal domains are found at residues 200 to 288 and 292 to 373; these read RGLD…SFRN and VFDR…RIGF. 5 helical membrane-spanning segments follow: residues 383–403, 406–426, 447–467, 475–495, and 540–560; these read LLAF…TFQF, FSFG…LGFL, FGLM…IGNG, MLIA…LFGA, and AIAN…WPGL.

This sequence belongs to the AAE transporter (TC 2.A.81) family. YbjL subfamily.

Its subcellular location is the cell membrane. The chain is Putative transport protein CKO_02260 from Citrobacter koseri (strain ATCC BAA-895 / CDC 4225-83 / SGSC4696).